We begin with the raw amino-acid sequence, 320 residues long: tRNA dimethylallyltransferase (320 aa).

ATP is bound at residue 14 to 21 (GPTASGKT). 16–21 (TASGKT) lines the substrate pocket. Interaction with substrate tRNA regions lie at residues 39 to 42 (DSAL) and 163 to 167 (QRLQR).

The protein belongs to the IPP transferase family. Monomer. Mg(2+) is required as a cofactor.

It catalyses the reaction adenosine(37) in tRNA + dimethylallyl diphosphate = N(6)-dimethylallyladenosine(37) in tRNA + diphosphate. Its function is as follows. Catalyzes the transfer of a dimethylallyl group onto the adenine at position 37 in tRNAs that read codons beginning with uridine, leading to the formation of N6-(dimethylallyl)adenosine (i(6)A). In Thioalkalivibrio sulfidiphilus (strain HL-EbGR7), this protein is tRNA dimethylallyltransferase.